A 459-amino-acid polypeptide reads, in one-letter code: N,N-dimethyl phenylurea N-demethylase subunit alpha (459 aa).

A Rieske domain is found at 55-166 (WVFVAHETEI…VESYHGFIFT (112 aa)). [2Fe-2S] cluster contacts are provided by Cys-97, His-99, Cys-117, and His-120. Residues His-225, His-230, and Asp-386 each contribute to the Fe cation site.

The protein belongs to the bacterial ring-hydroxylating dioxygenase alpha subunit family. As to quaternary structure, pdmA (subunit alpha) and PdmB (subunit beta) form the oxygenase component of a bacterial Rieske non-heme iron oxygenase (RO) system. Requires [2Fe-2S] cluster as cofactor. It depends on Fe cation as a cofactor.

It catalyses the reaction a 1,1-dimethyl-3-phenylurea + 2 reduced [2Fe-2S]-[ferredoxin] + O2 + 2 H(+) = a 1-methyl-3-phenylurea + formaldehyde + 2 oxidized [2Fe-2S]-[ferredoxin] + H2O. It carries out the reaction isoproturon + 2 reduced [2Fe-2S]-[ferredoxin] + O2 + 2 H(+) = 1-methyl-3-[4-(propan-2-yl)phenyl]urea + formaldehyde + 2 oxidized [2Fe-2S]-[ferredoxin] + H2O. The enzyme catalyses chlorotoluron + 2 reduced [2Fe-2S]-[ferredoxin] + O2 + 2 H(+) = 3-(3-chloro-4-methylphenyl)-1-methylurea + formaldehyde + 2 oxidized [2Fe-2S]-[ferredoxin] + H2O. The catalysed reaction is metoxuron + 2 reduced [2Fe-2S]-[ferredoxin] + O2 + 2 H(+) = 3-(3-chloro-4-methoxylphenyl)-1-methylurea + formaldehyde + 2 oxidized [2Fe-2S]-[ferredoxin] + H2O. It catalyses the reaction monuron + 2 reduced [2Fe-2S]-[ferredoxin] + O2 + 2 H(+) = 3-(4-chlorophenyl)-1-methylurea + formaldehyde + 2 oxidized [2Fe-2S]-[ferredoxin] + H2O. It carries out the reaction diuron + 2 reduced [2Fe-2S]-[ferredoxin] + O2 + 2 H(+) = 3-(3,4-dichlorophenyl)-1-methylurea + formaldehyde + 2 oxidized [2Fe-2S]-[ferredoxin] + H2O. The enzyme catalyses fluometuron + 2 reduced [2Fe-2S]-[ferredoxin] + O2 + 2 H(+) = 3-[3-(trifluoromethyl)phenyl]-1-methylurea + formaldehyde + 2 oxidized [2Fe-2S]-[ferredoxin] + H2O. The catalysed reaction is fenuron + 2 reduced [2Fe-2S]-[ferredoxin] + O2 + 2 H(+) = 1-methyl-3-phenylurea + formaldehyde + 2 oxidized [2Fe-2S]-[ferredoxin] + H2O. The protein operates within xenobiotic degradation. Activity is stimulated in vitro by coexpression of a [3Fe-4S]-type ferredoxin. Part of the multicomponent N,N-dimethyl phenylurea N-demethylase responsible for the initial N-demethylation step during the bacterial metabolism of N,N-dimethyl-substituted phenylurea herbicides. Catalyzes the mono-N-demethylation of N,N-dimethyl-substituted phenylurea herbicides to their mono-N-demethylated derivatives. Is active on isoproturon (IPU), chlorotoluron, metoxuron, monoron, diuron, fluometuron and fenuron, but cannot transform the N-methoxy-N-methyl-substituted herbicides. The sequence is that of N,N-dimethyl phenylurea N-demethylase subunit alpha from Sphingobium sp. (strain YBL2).